The sequence spans 379 residues: Putative acetyl-CoA C-acetyltransferase VraB (379 aa).

Catalysis depends on Cys86, which acts as the Acyl-thioester intermediate. His338 functions as the Proton acceptor in the catalytic mechanism.

This sequence belongs to the thiolase-like superfamily. Thiolase family.

This is Putative acetyl-CoA C-acetyltransferase VraB (vraB) from Staphylococcus aureus (strain MRSA252).